A 257-amino-acid chain; its full sequence is Indole-3-glycerol phosphate synthase (257 aa).

It belongs to the TrpC family.

It carries out the reaction 1-(2-carboxyphenylamino)-1-deoxy-D-ribulose 5-phosphate + H(+) = (1S,2R)-1-C-(indol-3-yl)glycerol 3-phosphate + CO2 + H2O. The protein operates within amino-acid biosynthesis; L-tryptophan biosynthesis; L-tryptophan from chorismate: step 4/5. This chain is Indole-3-glycerol phosphate synthase, found in Chlorobium chlorochromatii (strain CaD3).